A 540-amino-acid chain; its full sequence is Chaperonin GroEL (540 aa).

ATP is bound by residues 29 to 32, 86 to 90, G413, and D495; these read TLGP and DGTTT.

It belongs to the chaperonin (HSP60) family. As to quaternary structure, forms a cylinder of 14 subunits composed of two heptameric rings stacked back-to-back. Interacts with the co-chaperonin GroES.

It localises to the cytoplasm. It carries out the reaction ATP + H2O + a folded polypeptide = ADP + phosphate + an unfolded polypeptide.. Functionally, together with its co-chaperonin GroES, plays an essential role in assisting protein folding. The GroEL-GroES system forms a nano-cage that allows encapsulation of the non-native substrate proteins and provides a physical environment optimized to promote and accelerate protein folding. This is Chaperonin GroEL from Caldanaerobacter subterraneus subsp. tengcongensis (strain DSM 15242 / JCM 11007 / NBRC 100824 / MB4) (Thermoanaerobacter tengcongensis).